The primary structure comprises 512 residues: 2,3-bisphosphoglycerate-independent phosphoglycerate mutase (512 aa).

Residues aspartate 12 and serine 62 each contribute to the Mn(2+) site. Residue serine 62 is the Phosphoserine intermediate of the active site. Residues histidine 123, 153–154 (RD), arginine 185, arginine 191, 260–263 (RPDR), and lysine 333 each bind substrate. Positions 400, 404, 441, 442, and 460 each coordinate Mn(2+).

The protein belongs to the BPG-independent phosphoglycerate mutase family. In terms of assembly, monomer. Mn(2+) serves as cofactor.

The enzyme catalyses (2R)-2-phosphoglycerate = (2R)-3-phosphoglycerate. The protein operates within carbohydrate degradation; glycolysis; pyruvate from D-glyceraldehyde 3-phosphate: step 3/5. In terms of biological role, catalyzes the interconversion of 2-phosphoglycerate and 3-phosphoglycerate. The sequence is that of 2,3-bisphosphoglycerate-independent phosphoglycerate mutase from Clostridium beijerinckii (strain ATCC 51743 / NCIMB 8052) (Clostridium acetobutylicum).